The chain runs to 486 residues: MEPYALTMHELHDLLVRKELSVTETLTSFLTRIETLDPRLNSYLSVLAESSLAEAGRFDRGERDLHASPLAGIPLAIKDVLCMQGTVTTCGSRILENFVPPYDGTVIARLREAGAIFLGKTNMDEFAMGSSTENSAYGVTRNPWDRERVPGGSSGGSAAAVAADLCSGSLGTDTGGSIRQPASFCGVVGLKPTYGRVSRFGLVAFASSLDQIGPITKDVEDAAILLQAIAGHDRRDSTSVDHPVPDYRASLREPIKGLRLGIPKEYFVHGMHPEIADSVQRAINVCLQLGAEVGEVSLPHTGYGVAAYYIIAPAEASSNLARYDGVKYGLRVPDARDLIGMYRTSRSQGFGAEVKRRIMLGTYVLSAGYYDAYYTKASQARTLIRKDFLDAFDSFDALLAPVAPVPAFKIGEKSDDPLQMYLNDALTLPASLAGVPGISVPCGFSGEGLPIGLQILGPHFREDLLLRIAYQFEQATAHHLARPDSI.

Catalysis depends on charge relay system residues lysine 78 and serine 153. Residue serine 177 is the Acyl-ester intermediate of the active site.

It belongs to the amidase family. GatA subfamily. Heterotrimer of A, B and C subunits.

The catalysed reaction is L-glutamyl-tRNA(Gln) + L-glutamine + ATP + H2O = L-glutaminyl-tRNA(Gln) + L-glutamate + ADP + phosphate + H(+). Its function is as follows. Allows the formation of correctly charged Gln-tRNA(Gln) through the transamidation of misacylated Glu-tRNA(Gln) in organisms which lack glutaminyl-tRNA synthetase. The reaction takes place in the presence of glutamine and ATP through an activated gamma-phospho-Glu-tRNA(Gln). This Syntrophobacter fumaroxidans (strain DSM 10017 / MPOB) protein is Glutamyl-tRNA(Gln) amidotransferase subunit A.